A 454-amino-acid polypeptide reads, in one-letter code: Metacaspase-1A (454 aa).

The span at methionine 1–histidine 16 shows a compositional bias: gly residues. Residues methionine 1–histidine 129 form a disordered region. Composition is skewed to low complexity over residues tyrosine 38–asparagine 47, tyrosine 59–glutamine 80, glycine 88–arginine 101, and glycine 109–glycine 120. Residues histidine 244 and cysteine 300 contribute to the active site.

This sequence belongs to the peptidase C14B family.

Involved in cell death (apoptosis). This chain is Metacaspase-1A (casA), found in Neurospora crassa (strain ATCC 24698 / 74-OR23-1A / CBS 708.71 / DSM 1257 / FGSC 987).